The primary structure comprises 427 residues: Glutamate-1-semialdehyde 2,1-aminomutase (427 aa).

An N6-(pyridoxal phosphate)lysine modification is found at Lys-265.

The protein belongs to the class-III pyridoxal-phosphate-dependent aminotransferase family. HemL subfamily. As to quaternary structure, homodimer. Pyridoxal 5'-phosphate is required as a cofactor.

It is found in the cytoplasm. It carries out the reaction (S)-4-amino-5-oxopentanoate = 5-aminolevulinate. It functions in the pathway porphyrin-containing compound metabolism; protoporphyrin-IX biosynthesis; 5-aminolevulinate from L-glutamyl-tRNA(Glu): step 2/2. The chain is Glutamate-1-semialdehyde 2,1-aminomutase from Burkholderia thailandensis (strain ATCC 700388 / DSM 13276 / CCUG 48851 / CIP 106301 / E264).